The chain runs to 565 residues: NAD-dependent malic enzyme (565 aa).

The active-site Proton donor is the Y104. R157 serves as a coordination point for NAD(+). K175 serves as the catalytic Proton acceptor. E246, D247, and D270 together coordinate a divalent metal cation. NAD(+) is bound by residues D270 and N418.

Belongs to the malic enzymes family. Homotetramer. Mg(2+) serves as cofactor. The cofactor is Mn(2+).

The catalysed reaction is (S)-malate + NAD(+) = pyruvate + CO2 + NADH. It carries out the reaction oxaloacetate + H(+) = pyruvate + CO2. This Serratia proteamaculans (strain 568) protein is NAD-dependent malic enzyme.